The following is a 278-amino-acid chain: Large ribosomal subunit protein uL2 (278 aa).

The tract at residues Val-224–Arg-262 is disordered.

Belongs to the universal ribosomal protein uL2 family. Part of the 50S ribosomal subunit. Forms a bridge to the 30S subunit in the 70S ribosome.

Functionally, one of the primary rRNA binding proteins. Required for association of the 30S and 50S subunits to form the 70S ribosome, for tRNA binding and peptide bond formation. It has been suggested to have peptidyltransferase activity; this is somewhat controversial. Makes several contacts with the 16S rRNA in the 70S ribosome. This Leptospira biflexa serovar Patoc (strain Patoc 1 / Ames) protein is Large ribosomal subunit protein uL2.